The chain runs to 472 residues: MENFKHLPEPFRIRVIEPVKRTTREYREQAILKSGMNPFLLDSEDIFIDLLTDSGTGAVTQDMQAAMLRGDEAYSGSRSYYALAKAVKDIFGYEYTIPTHQGRGAEQIYIPVLIAKREREKGLDRSKMVVFSNYFFDTTQGHSQINGATVRNVYIKEAFDTTAKHPFKGNFDLEKLEKGIQEAGAHNVPYIVCTITCNSAGGQPVSIANLKGMYEIARKYDIPVIMDSARFAENAYFVQQREEAYKDWTIEQITYESYRYADGLAMSAKKDAMVPMGGILAFKDKSMEEVYHECRTLCVVQEGFPTYGGLEGGAMERLAVGLHDGMRQEWLAYRIAQIEYLVAGLEKIGVLCQQPGGHAAFVDAGKLLPHIPADQFPAQALSCELYKVAGIRAVEIGSFLLGRDPKTGKQLPCPAELLRLTVPRATYTQTHMDFIIEAFQKVKENAENIKGLTFTYEPKVLRHFTARLKEVE.

K270 bears the N6-(pyridoxal phosphate)lysine mark.

The protein belongs to the beta-eliminating lyase family. Homotetramer. Requires pyridoxal 5'-phosphate as cofactor.

The enzyme catalyses L-tryptophan + H2O = indole + pyruvate + NH4(+). Its pathway is amino-acid degradation; L-tryptophan degradation via pyruvate pathway; indole and pyruvate from L-tryptophan: step 1/1. The chain is Tryptophanase (tnaA) from Haemophilus influenzae.